Here is a 510-residue protein sequence, read N- to C-terminus: E3 ubiquitin-protein ligase TRIM7 (510 aa).

The RING-type zinc finger occupies 29-81; it reads CSICLEFFREPVSVECGHSFCRACIMRCWERPGAGTGTATRTLPCPLPCPQCR. The residue at position 106 (serine 106) is a Phosphoserine; by RPS6KA5. The B box-type zinc-finger motif lies at 124–165; that stretch reads AAAARCSQHGEQLKLYCQDDGRAICVVCDRAREHRSHAVLPL. Zn(2+) contacts are provided by cysteine 129, histidine 132, cysteine 151, and histidine 157. Positions 165 to 275 form a coiled coil; it reads LEEAVQEAKE…SGQIQETAQK (111 aa). The region spanning 323 to 510 is the B30.2/SPRY domain; sequence LLKKFKEDLQ…STGTYLRIWP (188 aa).

It belongs to the TRIM/RBCC family. In terms of assembly, forms homodimers. Interacts with GNIP2. Interacts with GYG1. Interacts with RNF187 (via C-terminus). Post-translationally, phosphorylated at Ser-106 by RPS6KA5/MSK1, which stimulates the ubiquitin ligase activity. In terms of processing, auto-ubiquitinates via 'Lys-63'-linked polyubiquitination. In terms of tissue distribution, highly expressed in antigen-presenting cells.

The protein resides in the nucleus. The protein localises to the cytoplasm. Its subcellular location is the golgi apparatus. It carries out the reaction S-ubiquitinyl-[E2 ubiquitin-conjugating enzyme]-L-cysteine + [acceptor protein]-L-lysine = [E2 ubiquitin-conjugating enzyme]-L-cysteine + N(6)-ubiquitinyl-[acceptor protein]-L-lysine.. It participates in protein modification; protein ubiquitination. E3 ubiquitin-protein ligase that have both tumor-promoting and tumor-suppressing activities and functions in several biological processes including innate immunity, regulation of ferroptosis as well as cell proliferation and migration. Acts as an antiviral effector against multiple viruses by targeting specific viral proteins for ubiquitination and degradation including norovirus NTPase protein. Mechanistically, recognizes the C-terminal glutamine-containing motif generated by viral proteases that process the polyproteins and trigger their ubiquitination and subsequent degradation. Mediates 'Lys-63'-linked polyubiquitination and stabilization of the JUN coactivator RNF187 in response to growth factor signaling via the MEK/ERK pathway, thereby regulating JUN transactivation and cellular proliferation. Promotes the TLR4-mediated signaling activation through its E3 ligase domain leading to production of pro-inflammatory cytokines and type I interferon. Also plays a negative role in the regulation of exogenous cytosolic DNA virus-triggered immune response. Mechanistically, enhances the 'Lys-48'-linked ubiquitination of STING1 leading to its proteasome-dependent degradation. Mediates the ubiquitination of the SIN3-HDAC chromatin remodeling complex component BRMS1. Modulates NCOA4-mediated ferritinophagy and ferroptosis in glioblastoma cells by ubiquitinating NCOA4, leading to its degradation. This chain is E3 ubiquitin-protein ligase TRIM7 (Trim7), found in Mus musculus (Mouse).